The chain runs to 131 residues: D-ribose pyranase (131 aa).

Residue His20 is the Proton donor of the active site. Substrate-binding positions include Asp28, His98, and 120–122 (YAN).

This sequence belongs to the RbsD / FucU family. RbsD subfamily. Homodecamer.

The protein resides in the cytoplasm. It catalyses the reaction beta-D-ribopyranose = beta-D-ribofuranose. The protein operates within carbohydrate metabolism; D-ribose degradation; D-ribose 5-phosphate from beta-D-ribopyranose: step 1/2. Its function is as follows. Catalyzes the interconversion of beta-pyran and beta-furan forms of D-ribose. This is D-ribose pyranase from Bacillus cereus (strain G9842).